A 228-amino-acid chain; its full sequence is DNA mismatch repair protein MutH (228 aa).

It belongs to the MutH family.

Its subcellular location is the cytoplasm. Sequence-specific endonuclease that cleaves unmethylated GATC sequences. It is involved in DNA mismatch repair. In Serratia proteamaculans (strain 568), this protein is DNA mismatch repair protein MutH.